The primary structure comprises 320 residues: MVSVNLEAKKIVDRMIEKADDLKIKVDKLENGSTVIDCGVNVDGSIKAGELYTGVCLGGLADVGISIPGDLSERFALPSVKIKTDFPAISTLGAQKAGWSVSVGDFFALGSGPARALSLKPAETYEEIGYQDEADVAILTLEADKLPGEDVTDMIAEECDVAAENVYVLVAPTSSLVGSIQISGRVVENGTYKMLEALHFDVNKVKYAAGIAPIAPVDPDSLKAMGKTNDAVLFGGRTYYYIESEEGDDIKSLAENLPSSASEGYGKPFYDVFREADYDFYKIDKGMFAPAEVVINDLRTGDVFRAGFVNEELLMKSFGL.

Belongs to the MCH family.

The protein localises to the cytoplasm. It carries out the reaction 5,10-methenyl-5,6,7,8-tetrahydromethanopterin + H2O = N(5)-formyl-5,6,7,8-tetrahydromethanopterin + H(+). Its pathway is one-carbon metabolism; methanogenesis from CO(2); 5,10-methenyl-5,6,7,8-tetrahydromethanopterin from CO(2): step 3/3. Catalyzes the reversible interconversion of 5-formyl-H(4)MPT to methenyl-H(4)MPT(+). This is Methenyltetrahydromethanopterin cyclohydrolase (mch) from Methanothermobacter thermautotrophicus (strain ATCC 29096 / DSM 1053 / JCM 10044 / NBRC 100330 / Delta H) (Methanobacterium thermoautotrophicum).